Reading from the N-terminus, the 350-residue chain is Dihydroorotate dehydrogenase (quinone) (350 aa).

FMN is bound by residues 65 to 69 (AGLDK) and Thr-89. Residue Lys-69 participates in substrate binding. Position 114-118 (114-118 (NRLGF)) interacts with substrate. Residues Asn-149 and Asn-182 each coordinate FMN. Asn-182 provides a ligand contact to substrate. The active-site Nucleophile is the Ser-185. Asn-187 is a substrate binding site. The FMN site is built by Lys-227 and Thr-255. Substrate is bound at residue 256–257 (NT). FMN-binding positions include Gly-278, Gly-307, and 328–329 (YT).

The protein belongs to the dihydroorotate dehydrogenase family. Type 2 subfamily. Monomer. The cofactor is FMN.

It localises to the cell membrane. The enzyme catalyses (S)-dihydroorotate + a quinone = orotate + a quinol. Its pathway is pyrimidine metabolism; UMP biosynthesis via de novo pathway; orotate from (S)-dihydroorotate (quinone route): step 1/1. Its function is as follows. Catalyzes the conversion of dihydroorotate to orotate with quinone as electron acceptor. This is Dihydroorotate dehydrogenase (quinone) from Polaromonas naphthalenivorans (strain CJ2).